The sequence spans 133 residues: Putative biopolymer transport protein ExbD-like 1 (133 aa).

Topologically, residues 1 to 15 are cytoplasmic; sequence MNYDNYWDEDKPELN. A helical transmembrane segment spans residues 16 to 32; it reads ITPLVDVMLVLLAILMV. The Periplasmic portion of the chain corresponds to 33–133; sequence TTPTLTYKEE…FLKVSLITSP (101 aa).

Belongs to the ExbD/TolR family.

It localises to the cell inner membrane. The polypeptide is Putative biopolymer transport protein ExbD-like 1 (Helicobacter pylori (strain ATCC 700392 / 26695) (Campylobacter pylori)).